Reading from the N-terminus, the 284-residue chain is D-tagatose-1,6-bisphosphate aldolase subunit GatY (284 aa).

The active-site Proton donor is the aspartate 82. Zn(2+)-binding residues include histidine 83 and histidine 180. Residue glycine 181 coordinates dihydroxyacetone phosphate. Histidine 208 provides a ligand contact to Zn(2+). Dihydroxyacetone phosphate contacts are provided by residues 209–211 and 230–233; these read GAS and NVAT.

This sequence belongs to the class II fructose-bisphosphate aldolase family. TagBP aldolase GatY subfamily. In terms of assembly, forms a complex with GatZ. Zn(2+) is required as a cofactor.

It carries out the reaction D-tagatofuranose 1,6-bisphosphate = D-glyceraldehyde 3-phosphate + dihydroxyacetone phosphate. It participates in carbohydrate metabolism; D-tagatose 6-phosphate degradation; D-glyceraldehyde 3-phosphate and glycerone phosphate from D-tagatose 6-phosphate: step 2/2. In terms of biological role, catalytic subunit of the tagatose-1,6-bisphosphate aldolase GatYZ, which catalyzes the reversible aldol condensation of dihydroxyacetone phosphate (DHAP or glycerone-phosphate) with glyceraldehyde 3-phosphate (G3P) to produce tagatose 1,6-bisphosphate (TBP). Requires GatZ subunit for full activity and stability. Is involved in the catabolism of galactitol. The polypeptide is D-tagatose-1,6-bisphosphate aldolase subunit GatY (Escherichia coli (strain 55989 / EAEC)).